Reading from the N-terminus, the 499-residue chain is Argininosuccinate lyase (499 aa).

The segment at 1–22 (MSDGEDHETANADDRDETVVRR) is disordered. A compositionally biased stretch (basic and acidic residues) spans 7 to 22 (HETANADDRDETVVRR).

It belongs to the lyase 1 family. Argininosuccinate lyase subfamily.

The protein resides in the cytoplasm. The catalysed reaction is 2-(N(omega)-L-arginino)succinate = fumarate + L-arginine. It participates in amino-acid biosynthesis; L-arginine biosynthesis; L-arginine from L-ornithine and carbamoyl phosphate: step 3/3. In Haloarcula marismortui (strain ATCC 43049 / DSM 3752 / JCM 8966 / VKM B-1809) (Halobacterium marismortui), this protein is Argininosuccinate lyase.